Here is a 1434-residue protein sequence, read N- to C-terminus: DNA-directed RNA polymerase subunit beta (1434 aa).

The protein belongs to the RNA polymerase beta chain family. In terms of assembly, the RNAP catalytic core consists of 2 alpha, 1 beta, 1 beta' and 1 omega subunit. When a sigma factor is associated with the core the holoenzyme is formed, which can initiate transcription.

The catalysed reaction is RNA(n) + a ribonucleoside 5'-triphosphate = RNA(n+1) + diphosphate. Functionally, DNA-dependent RNA polymerase catalyzes the transcription of DNA into RNA using the four ribonucleoside triphosphates as substrates. This Ureaplasma parvum serovar 3 (strain ATCC 700970) protein is DNA-directed RNA polymerase subunit beta.